The following is a 320-amino-acid chain: ATP-dependent 6-phosphofructokinase (320 aa).

G12 provides a ligand contact to ATP. Residues 22 to 26 (RGVVR) and 55 to 60 (RYSVSD) each bind ADP. ATP is bound by residues 73–74 (RF) and 103–106 (GDGS). D104 contacts Mg(2+). A substrate-binding site is contributed by 126-128 (TID). Residue D128 is the Proton acceptor of the active site. An ADP-binding site is contributed by R155. Substrate-binding positions include R163 and 170-172 (MGR). Residues 186–188 (GCE), K212, and 214–216 (KKH) each bind ADP. Residues E223, R244, and 250 to 253 (HIQR) contribute to the substrate site.

This sequence belongs to the phosphofructokinase type A (PFKA) family. ATP-dependent PFK group I subfamily. Prokaryotic clade 'B1' sub-subfamily. In terms of assembly, homotetramer. The cofactor is Mg(2+).

It localises to the cytoplasm. The catalysed reaction is beta-D-fructose 6-phosphate + ATP = beta-D-fructose 1,6-bisphosphate + ADP + H(+). The protein operates within carbohydrate degradation; glycolysis; D-glyceraldehyde 3-phosphate and glycerone phosphate from D-glucose: step 3/4. Its activity is regulated as follows. Allosterically activated by ADP and other diphosphonucleosides, and allosterically inhibited by phosphoenolpyruvate. Its function is as follows. Catalyzes the phosphorylation of D-fructose 6-phosphate to fructose 1,6-bisphosphate by ATP, the first committing step of glycolysis. This Klebsiella pneumoniae (strain 342) protein is ATP-dependent 6-phosphofructokinase.